The chain runs to 568 residues: Urocanate hydratase (568 aa).

Residues 58 to 59 (GG), Gln136, 182 to 184 (GMG), Glu202, Arg207, 248 to 249 (NA), 269 to 273 (QTSAH), 279 to 280 (YL), and Tyr328 each bind NAD(+). The active site involves Cys416. Gly498 contacts NAD(+).

The protein belongs to the urocanase family. It depends on NAD(+) as a cofactor.

Its subcellular location is the cytoplasm. The enzyme catalyses 4-imidazolone-5-propanoate = trans-urocanate + H2O. Its pathway is amino-acid degradation; L-histidine degradation into L-glutamate; N-formimidoyl-L-glutamate from L-histidine: step 2/3. Functionally, catalyzes the conversion of urocanate to 4-imidazolone-5-propionate. This is Urocanate hydratase from Photobacterium profundum (strain SS9).